Consider the following 135-residue polypeptide: Interleukin-4 (135 aa).

A signal peptide spans 1–24; the sequence is MGLTSQLIPVLVCLLVCTSHFVHG. Disulfide bonds link C27–C135, C48–C85, and C70–C105. N-linked (GlcNAc...) asparagine glycosylation occurs at N62.

Belongs to the IL-4/IL-13 family.

It localises to the secreted. In terms of biological role, participates in at least several B-cell activation processes as well as of other cell types. It is a costimulator of DNA-synthesis. It induces the expression of class II MHC molecules on resting B-cells. It enhances both secretion and cell surface expression of IgE and IgG1. It also regulates the expression of the low affinity Fc receptor for IgE (CD23) on both lymphocytes and monocytes. Positively regulates IL31RA expression in macrophages. Stimulates autophagy in dendritic cells by interfering with mTORC1 signaling and through the induction of RUFY4. The protein is Interleukin-4 (IL4) of Bos taurus (Bovine).